A 191-amino-acid polypeptide reads, in one-letter code: Probable protein adenylyltransferase HI_0977 (191 aa).

Positions 37–162 (GSTKGLQQIH…NDLEIRFLLQ (126 aa)) constitute a Fido domain. ATP is bound by residues 67 to 68 (KG), 112 to 114 (GNG), Arg-118, and Gln-145.

It belongs to the fic family.

It catalyses the reaction L-tyrosyl-[protein] + ATP = O-(5'-adenylyl)-L-tyrosyl-[protein] + diphosphate. It carries out the reaction L-threonyl-[protein] + ATP = 3-O-(5'-adenylyl)-L-threonyl-[protein] + diphosphate. Its function is as follows. Probable adenylyltransferase that mediates the addition of adenosine 5'-monophosphate (AMP) to specific residues of target proteins. In Haemophilus influenzae (strain ATCC 51907 / DSM 11121 / KW20 / Rd), this protein is Probable protein adenylyltransferase HI_0977.